The following is a 367-amino-acid chain: Alanine racemase (367 aa).

The active-site Proton acceptor; specific for D-alanine is lysine 40. Lysine 40 is modified (N6-(pyridoxal phosphate)lysine). Arginine 136 serves as a coordination point for substrate. The Proton acceptor; specific for L-alanine role is filled by tyrosine 263. Methionine 310 provides a ligand contact to substrate.

Belongs to the alanine racemase family. Pyridoxal 5'-phosphate is required as a cofactor.

The catalysed reaction is L-alanine = D-alanine. It functions in the pathway amino-acid biosynthesis; D-alanine biosynthesis; D-alanine from L-alanine: step 1/1. Its function is as follows. Catalyzes the interconversion of L-alanine and D-alanine. May also act on other amino acids. In Lactococcus lactis subsp. cremoris (strain SK11), this protein is Alanine racemase (alr).